The sequence spans 241 residues: L-aspartate dehydrogenase (241 aa).

NAD(+) contacts are provided by residues 10-11, Asp28, 56-57, 63-64, 78-79, Ala109, and Asn164; these read NI, AS, EY, and IS. Residue His193 is part of the active site.

The protein belongs to the L-aspartate dehydrogenase family. In terms of assembly, homodimer.

The enzyme catalyses L-aspartate + NADP(+) + H2O = oxaloacetate + NH4(+) + NADPH + H(+). It catalyses the reaction L-aspartate + NAD(+) + H2O = oxaloacetate + NH4(+) + NADH + H(+). Its pathway is cofactor biosynthesis; NAD(+) biosynthesis; iminoaspartate from L-aspartate (dehydrogenase route): step 1/1. With respect to regulation, competitively inhibited by L-malate and NH(4)(+). Functionally, specifically catalyzes the NAD or NADP-dependent dehydrogenation of L-aspartate to iminoaspartate. Does not show aspartate oxidase activity. Is also able to catalyze the reverse reaction, i.e. the reductive amination of oxaloacetate. In Thermotoga maritima (strain ATCC 43589 / DSM 3109 / JCM 10099 / NBRC 100826 / MSB8), this protein is L-aspartate dehydrogenase.